A 329-amino-acid chain; its full sequence is Pantothenate kinase (329 aa).

The disordered stretch occupies residues 1–21 (MISPVPSIPRSAHRQRPEATP). 107-114 (GSVAVGKS) is an ATP binding site.

It belongs to the prokaryotic pantothenate kinase family.

The protein resides in the cytoplasm. The catalysed reaction is (R)-pantothenate + ATP = (R)-4'-phosphopantothenate + ADP + H(+). The protein operates within cofactor biosynthesis; coenzyme A biosynthesis; CoA from (R)-pantothenate: step 1/5. The protein is Pantothenate kinase (coaA) of Streptomyces coelicolor (strain ATCC BAA-471 / A3(2) / M145).